We begin with the raw amino-acid sequence, 100 residues long: Small ribosomal subunit protein uS14c (100 aa).

The protein belongs to the universal ribosomal protein uS14 family. As to quaternary structure, part of the 30S ribosomal subunit.

The protein resides in the plastid. In terms of biological role, binds 16S rRNA, required for the assembly of 30S particles. This is Small ribosomal subunit protein uS14c from Euglena longa (Euglenophycean alga).